A 257-amino-acid chain; its full sequence is Probable septum site-determining protein MinC (257 aa).

Low complexity predominate over residues 123–141; the sequence is AVEAAAAPAAEPTPEPGAA. The interval 123-144 is disordered; sequence AVEAAAAPAAEPTPEPGAASQP.

This sequence belongs to the MinC family. Interacts with MinD and FtsZ.

Cell division inhibitor that blocks the formation of polar Z ring septums. Rapidly oscillates between the poles of the cell to destabilize FtsZ filaments that have formed before they mature into polar Z rings. Prevents FtsZ polymerization. The chain is Probable septum site-determining protein MinC from Burkholderia multivorans (strain ATCC 17616 / 249).